Consider the following 272-residue polypeptide: S-adenosylmethionine decarboxylase proenzyme (272 aa).

Catalysis depends on Ser-117, which acts as the Schiff-base intermediate with substrate; via pyruvic acid. Ser-117 bears the Pyruvic acid (Ser); by autocatalysis mark. The Proton acceptor; for processing activity role is filled by His-122. Cys-145 acts as the Proton donor; for catalytic activity in catalysis.

Belongs to the prokaryotic AdoMetDC family. Type 2 subfamily. As to quaternary structure, heterooctamer of four alpha and four beta chains arranged as a tetramer of alpha/beta heterodimers. Pyruvate is required as a cofactor. Is synthesized initially as an inactive proenzyme. Formation of the active enzyme involves a self-maturation process in which the active site pyruvoyl group is generated from an internal serine residue via an autocatalytic post-translational modification. Two non-identical subunits are generated from the proenzyme in this reaction, and the pyruvate is formed at the N-terminus of the alpha chain, which is derived from the carboxyl end of the proenzyme. The post-translation cleavage follows an unusual pathway, termed non-hydrolytic serinolysis, in which the side chain hydroxyl group of the serine supplies its oxygen atom to form the C-terminus of the beta chain, while the remainder of the serine residue undergoes an oxidative deamination to produce ammonia and the pyruvoyl group blocking the N-terminus of the alpha chain.

It catalyses the reaction S-adenosyl-L-methionine + H(+) = S-adenosyl 3-(methylsulfanyl)propylamine + CO2. It functions in the pathway amine and polyamine biosynthesis; S-adenosylmethioninamine biosynthesis; S-adenosylmethioninamine from S-adenosyl-L-methionine: step 1/1. Its function is as follows. Catalyzes the decarboxylation of S-adenosylmethionine to S-adenosylmethioninamine (dcAdoMet), the propylamine donor required for the synthesis of the polyamines spermine and spermidine from the diamine putrescine. The sequence is that of S-adenosylmethionine decarboxylase proenzyme from Halorhodospira halophila (strain DSM 244 / SL1) (Ectothiorhodospira halophila (strain DSM 244 / SL1)).